Consider the following 160-residue polypeptide: Phosphopantetheine adenylyltransferase (160 aa).

Thr-9 contacts substrate. Residues 9–10 (TF) and His-17 each bind ATP. Lys-41, Leu-73, and Arg-87 together coordinate substrate. ATP is bound by residues 88–90 (GLR), Glu-98, and 123–129 (YSFISST).

The protein belongs to the bacterial CoaD family. In terms of assembly, homohexamer. It depends on Mg(2+) as a cofactor.

The protein localises to the cytoplasm. It carries out the reaction (R)-4'-phosphopantetheine + ATP + H(+) = 3'-dephospho-CoA + diphosphate. It participates in cofactor biosynthesis; coenzyme A biosynthesis; CoA from (R)-pantothenate: step 4/5. Its function is as follows. Reversibly transfers an adenylyl group from ATP to 4'-phosphopantetheine, yielding dephospho-CoA (dPCoA) and pyrophosphate. The chain is Phosphopantetheine adenylyltransferase from Ectopseudomonas mendocina (strain ymp) (Pseudomonas mendocina).